A 751-amino-acid chain; its full sequence is Probable alpha-galactosidase C (751 aa).

Positions 1-27 are cleaved as a signal peptide; it reads MFGSPKRAALAAASLLAVFGNGPSVMA. N-linked (GlcNAc...) asparagine glycans are attached at residues asparagine 49, asparagine 57, asparagine 162, asparagine 186, asparagine 194, asparagine 366, asparagine 433, asparagine 452, and asparagine 500. Aspartate 510 functions as the Nucleophile in the catalytic mechanism. Residue aspartate 572 is the Proton donor of the active site. Asparagine 720 carries an N-linked (GlcNAc...) asparagine glycan.

Belongs to the glycosyl hydrolase 36 family. In terms of assembly, homotetramer. Requires Mg(2+) as cofactor. It depends on NAD(+) as a cofactor.

It localises to the secreted. The catalysed reaction is Hydrolysis of terminal, non-reducing alpha-D-galactose residues in alpha-D-galactosides, including galactose oligosaccharides, galactomannans and galactolipids.. In terms of biological role, hydrolyzes a variety of simple alpha-D-galactoside as well as more complex molecules such as oligosaccharides and polysaccharides. The polypeptide is Probable alpha-galactosidase C (aglC) (Aspergillus oryzae (strain ATCC 42149 / RIB 40) (Yellow koji mold)).